The chain runs to 477 residues: Proline--tRNA ligase (477 aa).

It belongs to the class-II aminoacyl-tRNA synthetase family. ProS type 3 subfamily. In terms of assembly, homodimer.

The protein resides in the cytoplasm. The catalysed reaction is tRNA(Pro) + L-proline + ATP = L-prolyl-tRNA(Pro) + AMP + diphosphate. Functionally, catalyzes the attachment of proline to tRNA(Pro) in a two-step reaction: proline is first activated by ATP to form Pro-AMP and then transferred to the acceptor end of tRNA(Pro). The chain is Proline--tRNA ligase from Methanoculleus marisnigri (strain ATCC 35101 / DSM 1498 / JR1).